We begin with the raw amino-acid sequence, 275 residues long: Ribosomal RNA small subunit methyltransferase A (275 aa).

Residues Asn-28, Leu-30, Gly-55, Glu-77, Asp-103, and Asn-123 each coordinate S-adenosyl-L-methionine.

It belongs to the class I-like SAM-binding methyltransferase superfamily. rRNA adenine N(6)-methyltransferase family. RsmA subfamily.

It localises to the cytoplasm. It catalyses the reaction adenosine(1518)/adenosine(1519) in 16S rRNA + 4 S-adenosyl-L-methionine = N(6)-dimethyladenosine(1518)/N(6)-dimethyladenosine(1519) in 16S rRNA + 4 S-adenosyl-L-homocysteine + 4 H(+). Specifically dimethylates two adjacent adenosines (A1518 and A1519) in the loop of a conserved hairpin near the 3'-end of 16S rRNA in the 30S particle. May play a critical role in biogenesis of 30S subunits. In Rhizobium etli (strain CIAT 652), this protein is Ribosomal RNA small subunit methyltransferase A.